Here is a 382-residue protein sequence, read N- to C-terminus: S-adenosylmethionine synthase (382 aa).

Residue His-14 participates in ATP binding. Asp-16 contributes to the Mg(2+) binding site. A K(+)-binding site is contributed by Glu-42. Residues Glu-55 and Gln-91 each contribute to the L-methionine site. The tract at residues 91 to 101 is flexible loop; that stretch reads QSENIAMGVNL. ATP is bound by residues 156 to 158, 222 to 223, Asp-231, 237 to 238, Ala-254, and Lys-258; these read DMK, KF, and RK. An L-methionine-binding site is contributed by Asp-231. Position 262 (Lys-262) interacts with L-methionine.

Belongs to the AdoMet synthase family. As to quaternary structure, homotetramer; dimer of dimers. The cofactor is Mg(2+). K(+) serves as cofactor.

The protein localises to the cytoplasm. It carries out the reaction L-methionine + ATP + H2O = S-adenosyl-L-methionine + phosphate + diphosphate. It participates in amino-acid biosynthesis; S-adenosyl-L-methionine biosynthesis; S-adenosyl-L-methionine from L-methionine: step 1/1. Its function is as follows. Catalyzes the formation of S-adenosylmethionine (AdoMet) from methionine and ATP. The overall synthetic reaction is composed of two sequential steps, AdoMet formation and the subsequent tripolyphosphate hydrolysis which occurs prior to release of AdoMet from the enzyme. This is S-adenosylmethionine synthase from Mycoplasmopsis synoviae (strain 53) (Mycoplasma synoviae).